The chain runs to 225 residues: tRNA (guanine-N(1)-)-methyltransferase (225 aa).

S-adenosyl-L-methionine-binding positions include glycine 112 and 132 to 137 (IGDYVL).

Belongs to the RNA methyltransferase TrmD family. In terms of assembly, homodimer.

Its subcellular location is the cytoplasm. The catalysed reaction is guanosine(37) in tRNA + S-adenosyl-L-methionine = N(1)-methylguanosine(37) in tRNA + S-adenosyl-L-homocysteine + H(+). In terms of biological role, specifically methylates guanosine-37 in various tRNAs. This chain is tRNA (guanine-N(1)-)-methyltransferase, found in Bacteroides fragilis (strain ATCC 25285 / DSM 2151 / CCUG 4856 / JCM 11019 / LMG 10263 / NCTC 9343 / Onslow / VPI 2553 / EN-2).